We begin with the raw amino-acid sequence, 943 residues long: MRKLVILIILSIVCSLFIGSIESVDTSKFKTCKDSHFCKRNRVSHEVGVMNEMKSKQNFNIVEGSIKLVKQENTIYFDLQEQNQKSNLLTMKLEIYEGGIVRMRAQEKEPLLNKQRYQVQDVLLDTIKTVPIQWKQEPSKQSNTFSFKHGEKECCYVLVQLVPFKLDVYIMNELAITTNSDNLFHFEPISDKPQPLPPKEKKSEEENKEANQEEDNNNNNNDNNEEQQVSTEGYWEERFGSHQDSKPNGPMSIGMDFTFVGSSHVYGIPEHTTRLSLKSTTGNGINEQPYRLYNLDVFEYEIDKTMALYGHVPLMISHDTKKTVGVFWLNAAETFVDIEDVTTPVSPSKKTHWISESGIIDVFYLTGPTPSTIFKQYAYLTGTTALPQMFSLGYHQCKWNYKSEDDVKQVDNGFDENHIPYDVIWLDIEHTDGKRYFTWDNNNFPTPADMQNIIGAKHRKMVTIVDPHIKRDNNYYVHSEATSKGYYIKNKDGNDYDGWCWPGSSSYLDFTNPEIRKWWATQFGYDKYKGSTPNLYIWNDMNEPSVFNGPEVSMHKDAKHHGGFEHRDVHNLYGYYYHMASADGLVQRNADQNDRPFVLSRAFYAGSQRIGAIWTGDNSAQWSHLEISNPMLLSMNLAGITFSGADVGGFFGNPDAELLTRWYQAGAFQPFFRGHAHLDSRRREPWLFNEPYTTIIREAIVKRYSYLPLWYTTFYQNTLNGAPVMRPLWVQYPKEANLFDVDDHYLIGDSLLVKPVTQQSCKTMKVLLPGQSVNEIWYDVDTEKPINAGVIEIDTPLEKIPVYQRGGSIISKKERVRRSTYQMRDDPYTIRIALDSSKSAQGQLYIDDEHSFDYKKGKFLYRQFTFKDNVLSFSDASNKSSTSYKPNVTIEKIVILGVQKPHSITCNITGKEKLSFEYDSTLSKLTIRKPDLLVDTDFIIKLN.

An N-terminal signal peptide occupies residues 1–23 (MRKLVILIILSIVCSLFIGSIES). Residues 186-231 (FEPISDKPQPLPPKEKKSEEENKEANQEEDNNNNNNDNNEEQQVST) are disordered. Over residues 198–211 (PKEKKSEEENKEAN) the composition is skewed to basic and acidic residues. Residue D540 is the Nucleophile of the active site. E543 is an active-site residue. Residue D617 is the Proton donor of the active site. Residues N878, N887, and N907 are each glycosylated (N-linked (GlcNAc...) asparagine).

This sequence belongs to the glycosyl hydrolase 31 family.

The protein resides in the endoplasmic reticulum. Its subcellular location is the golgi apparatus. The catalysed reaction is N(4)-(alpha-D-Glc-(1-&gt;3)-alpha-D-Man-(1-&gt;2)-alpha-D-Man-(1-&gt;2)-alpha-D-Man-(1-&gt;3)-[alpha-D-Man-(1-&gt;2)-alpha-D-Man-(1-&gt;3)-[alpha-D-Man-(1-&gt;2)-alpha-D-Man-(1-&gt;6)]-alpha-D-Man-(1-&gt;6)]-beta-D-Man-(1-&gt;4)-beta-D-GlcNAc-(1-&gt;4)-beta-D-GlcNAc)-L-asparaginyl-[protein] + H2O = N(4)-(alpha-D-Man-(1-&gt;2)-alpha-D-Man-(1-&gt;2)-alpha-D-Man-(1-&gt;3)-[alpha-D-Man-(1-&gt;2)-alpha-D-Man-(1-&gt;3)-[alpha-D-Man-(1-&gt;2)-alpha-D-Man-(1-&gt;6)]-alpha-D-Man-(1-&gt;6)]-beta-D-Man-(1-&gt;4)-beta-D-GlcNAc-(1-&gt;4)-beta-D-GlcNAc)-L-asparaginyl-[protein] (N-glucan mannose isomer 9A1,2,3B1,2,3) + beta-D-glucose. It carries out the reaction N(4)-(alpha-D-Glc-(1-&gt;3)-alpha-D-Glc-(1-&gt;3)-alpha-D-Man-(1-&gt;2)-alpha-D-Man-(1-&gt;2)-alpha-D-Man-(1-&gt;3)-[alpha-D-Man-(1-&gt;2)-alpha-D-Man-(1-&gt;3)-[alpha-D-Man-(1-&gt;2)-alpha-D-Man-(1-&gt;6)]-alpha-D-Man-(1-&gt;6)]-beta-D-Man-(1-&gt;4)-beta-D-GlcNAc-(1-&gt;4)-beta-D-GlcNAc)-L-asparaginyl-[protein] + H2O = N(4)-(alpha-D-Glc-(1-&gt;3)-alpha-D-Man-(1-&gt;2)-alpha-D-Man-(1-&gt;2)-alpha-D-Man-(1-&gt;3)-[alpha-D-Man-(1-&gt;2)-alpha-D-Man-(1-&gt;3)-[alpha-D-Man-(1-&gt;2)-alpha-D-Man-(1-&gt;6)]-alpha-D-Man-(1-&gt;6)]-beta-D-Man-(1-&gt;4)-beta-D-GlcNAc-(1-&gt;4)-beta-D-GlcNAc)-L-asparaginyl-[protein] + beta-D-glucose. It participates in glycan metabolism; N-glycan metabolism. Its function is as follows. Cleaves sequentially the 2 innermost alpha-1,3-linked glucose residues from N-linked oligosaccharides on newly synthesized glycoproteins. This is Neutral alpha-glucosidase AB (modA) from Dictyostelium discoideum (Social amoeba).